A 211-amino-acid chain; its full sequence is tRNA (guanine-N(7)-)-methyltransferase (211 aa).

Residues glutamate 43, glutamate 68, asparagine 95, and aspartate 117 each contribute to the S-adenosyl-L-methionine site. The active site involves aspartate 117. Residues lysine 121, aspartate 153, and 190 to 193 each bind substrate; that span reads TEYE.

This sequence belongs to the class I-like SAM-binding methyltransferase superfamily. TrmB family.

The catalysed reaction is guanosine(46) in tRNA + S-adenosyl-L-methionine = N(7)-methylguanosine(46) in tRNA + S-adenosyl-L-homocysteine. The protein operates within tRNA modification; N(7)-methylguanine-tRNA biosynthesis. Catalyzes the formation of N(7)-methylguanine at position 46 (m7G46) in tRNA. In Alkaliphilus oremlandii (strain OhILAs) (Clostridium oremlandii (strain OhILAs)), this protein is tRNA (guanine-N(7)-)-methyltransferase.